The sequence spans 49 residues: Osteocalcin (49 aa).

Residues 1-47 (YLDHGLGAPAPYPDPLEPKREVCELNPDCDELADHIGFQEAYRRFYG) enclose the Gla domain. P9 carries the post-translational modification Hydroxyproline. Ca(2+) contacts are provided by E17, E21, E24, and D30. A 4-carboxyglutamate mark is found at E17, E21, and E24. A disulfide bridge links C23 with C29.

Belongs to the osteocalcin/matrix Gla protein family. Post-translationally, gamma-carboxyglutamic acid residues are formed by vitamin K dependent carboxylation. These residues are essential for the binding of calcium.

The protein resides in the secreted. Functionally, the carboxylated form is one of the main organic components of the bone matrix, which constitutes 1-2% of the total bone protein: it acts as a negative regulator of bone formation and is required to limit bone formation without impairing bone resorption or mineralization. The carboxylated form binds strongly to apatite and calcium. The uncarboxylated form acts as a hormone secreted by osteoblasts, which regulates different cellular processes, such as energy metabolism, male fertility and brain development. Regulates of energy metabolism by acting as a hormone favoring pancreatic beta-cell proliferation, insulin secretion and sensitivity and energy expenditure. Uncarboxylated osteocalcin hormone also promotes testosterone production in the testes: acts as a ligand for G protein-coupled receptor GPRC6A at the surface of Leydig cells, initiating a signaling response that promotes the expression of enzymes required for testosterone synthesis in a CREB-dependent manner. Also acts as a regulator of brain development: osteocalcin hormone crosses the blood-brain barrier and acts as a ligand for GPR158 on neurons, initiating a signaling response that prevents neuronal apoptosis in the hippocampus, favors the synthesis of all monoamine neurotransmitters and inhibits that of gamma-aminobutyric acid (GABA). Osteocalcin also crosses the placenta during pregnancy and maternal osteocalcin is required for fetal brain development. In Bison priscus (Steppe wisent), this protein is Osteocalcin (BGLAP).